Reading from the N-terminus, the 119-residue chain is Large ribosomal subunit protein bL20 (119 aa).

The protein belongs to the bacterial ribosomal protein bL20 family.

In terms of biological role, binds directly to 23S ribosomal RNA and is necessary for the in vitro assembly process of the 50S ribosomal subunit. It is not involved in the protein synthesizing functions of that subunit. The chain is Large ribosomal subunit protein bL20 from Alkaliphilus oremlandii (strain OhILAs) (Clostridium oremlandii (strain OhILAs)).